Here is a 515-residue protein sequence, read N- to C-terminus: Envelope glycoprotein (515 aa).

The signal sequence occupies residues 1–33; it reads MPKERRSRRRPQPIIRWVSLTLTLLALCQPIQT. The Extracellular portion of the chain corresponds to 34-435; sequence WRCSLSLGNQ…LGLTAWVRET (402 aa). Asparagine 129 and asparagine 203 each carry an N-linked (GlcNAc...) asparagine; by host glycan. The CXXC motif lies at 212–215; that stretch reads CAIC. 3 disulfide bridges follow: cysteine 212–cysteine 215, cysteine 212–cysteine 392, and cysteine 384–cysteine 391. N-linked (GlcNAc...) asparagine; by host glycans are attached at residues asparagine 230, asparagine 251, asparagine 256, asparagine 271, and asparagine 287. The interval 304-324 is fusion peptide; the sequence is VAALTLGLALSVGLTGINVAV. Coiled coils occupy residues 330-376 and 388-420; these read QRLT…WLYI and NEPC…DWQW. Asparagine 351 is a glycosylation site (N-linked (GlcNAc...) asparagine; by host). The segment at 365–381 is immunosuppression; sequence AQNRRGLDWLYIRLGFQ. The CX6CC motif lies at 384–392; the sequence is CPTINEPCC. Residue asparagine 398 is glycosylated (N-linked (GlcNAc...) asparagine; by host). A helical transmembrane segment spans residues 436–456; that stretch reads IHSVLSLFLLALFLLFLAPCL. Residue cysteine 455 is the site of S-palmitoyl cysteine; by host attachment. Topologically, residues 457–515 are cytoplasmic; that stretch reads IKCLTSRLLKLLRQAPHFPEISFPPKPDSDYQALLPSAPEIYSHLSPTKPDYINLRPCP.

The mature envelope protein (Env) consists of a trimer of SU-TM heterodimers attached by a labile interchain disulfide bond. In terms of processing, specific enzymatic cleavages in vivo yield mature proteins. Envelope glycoproteins are synthesized as an inactive precursor that is N-glycosylated and processed likely by host cell furin or by a furin-like protease in the Golgi to yield the mature SU and TM proteins. The cleavage site between SU and TM requires the minimal sequence [KR]-X-[KR]-R. Post-translationally, the CXXC motif is highly conserved across a broad range of retroviral envelope proteins. It is thought to participate in the formation of a labile disulfide bond possibly with the CX6CC motif present in the transmembrane protein. Isomerization of the intersubunit disulfide bond to an SU intrachain disulfide bond is thought to occur upon receptor recognition in order to allow membrane fusion. The transmembrane protein is palmitoylated.

Its subcellular location is the virion membrane. The protein localises to the host cell membrane. Its function is as follows. The surface protein (SU) attaches the virus to the host cell by binding to its receptor. This interaction triggers the refolding of the transmembrane protein (TM) and is thought to activate its fusogenic potential by unmasking its fusion peptide. Fusion occurs at the host cell plasma membrane. In terms of biological role, the transmembrane protein (TM) acts as a class I viral fusion protein. Under the current model, the protein has at least 3 conformational states: pre-fusion native state, pre-hairpin intermediate state, and post-fusion hairpin state. During viral and target cell membrane fusion, the coiled coil regions (heptad repeats) assume a trimer-of-hairpins structure, positioning the fusion peptide in close proximity to the C-terminal region of the ectodomain. The formation of this structure appears to drive apposition and subsequent fusion of viral and target cell membranes. Membranes fusion leads to delivery of the nucleocapsid into the cytoplasm. In Bovine leukemia virus (isolate Belgium LB59) (BLV), this protein is Envelope glycoprotein (env).